Here is a 369-residue protein sequence, read N- to C-terminus: UDP-3-O-acylglucosamine N-acyltransferase (369 aa).

H263 functions as the Proton acceptor in the catalytic mechanism.

Belongs to the transferase hexapeptide repeat family. LpxD subfamily. In terms of assembly, homotrimer.

It catalyses the reaction a UDP-3-O-[(3R)-3-hydroxyacyl]-alpha-D-glucosamine + a (3R)-hydroxyacyl-[ACP] = a UDP-2-N,3-O-bis[(3R)-3-hydroxyacyl]-alpha-D-glucosamine + holo-[ACP] + H(+). It participates in bacterial outer membrane biogenesis; LPS lipid A biosynthesis. Catalyzes the N-acylation of UDP-3-O-acylglucosamine using 3-hydroxyacyl-ACP as the acyl donor. Is involved in the biosynthesis of lipid A, a phosphorylated glycolipid that anchors the lipopolysaccharide to the outer membrane of the cell. The polypeptide is UDP-3-O-acylglucosamine N-acyltransferase (Burkholderia vietnamiensis (strain G4 / LMG 22486) (Burkholderia cepacia (strain R1808))).